Reading from the N-terminus, the 64-residue chain is Chassatide C7 (64 aa).

Positions Val-1 to Val-35 are cleaved as a propeptide — removed in mature form. Cystine bridges form between Cys-39/Cys-55, Cys-43/Cys-57, and Cys-48/Cys-62.

Expressed in fruit, pedicel, root and stem but not in leaf (at protein level).

In terms of biological role, probably participates in a plant defense mechanism. Active against E.coli ATTC25922 but not against S.aureus ATCC 12600 or S.epidermidis ATCC 14990. Has cytotoxic and hemolytic activity. This Chassalia chartacea (Chassalia curviflora) protein is Chassatide C7.